Reading from the N-terminus, the 141-residue chain is Large ribosomal subunit protein uL11 (141 aa).

It belongs to the universal ribosomal protein uL11 family. Part of the ribosomal stalk of the 50S ribosomal subunit. Interacts with L10 and the large rRNA to form the base of the stalk. L10 forms an elongated spine to which L12 dimers bind in a sequential fashion forming a multimeric L10(L12)X complex. In terms of processing, one or more lysine residues are methylated.

Its function is as follows. Forms part of the ribosomal stalk which helps the ribosome interact with GTP-bound translation factors. The sequence is that of Large ribosomal subunit protein uL11 from Gloeobacter violaceus (strain ATCC 29082 / PCC 7421).